The chain runs to 152 residues: Ribosomal RNA large subunit methyltransferase H (152 aa).

S-adenosyl-L-methionine is bound by residues leucine 68, glycine 100, and 119 to 124 (FGRMTW).

This sequence belongs to the RNA methyltransferase RlmH family. In terms of assembly, homodimer.

The protein resides in the cytoplasm. It carries out the reaction pseudouridine(1915) in 23S rRNA + S-adenosyl-L-methionine = N(3)-methylpseudouridine(1915) in 23S rRNA + S-adenosyl-L-homocysteine + H(+). Specifically methylates the pseudouridine at position 1915 (m3Psi1915) in 23S rRNA. The polypeptide is Ribosomal RNA large subunit methyltransferase H (Paramagnetospirillum magneticum (strain ATCC 700264 / AMB-1) (Magnetospirillum magneticum)).